The primary structure comprises 324 residues: Acetyl-coenzyme A carboxylase carboxyl transferase subunit alpha (324 aa).

The region spanning 37-291 is the CoA carboxyltransferase C-terminal domain; the sequence is KLDKRLDRLK…QEYVLQEWLK (255 aa).

Belongs to the AccA family. In terms of assembly, acetyl-CoA carboxylase is a heterohexamer composed of biotin carboxyl carrier protein (AccB), biotin carboxylase (AccC) and two subunits each of ACCase subunit alpha (AccA) and ACCase subunit beta (AccD).

Its subcellular location is the cytoplasm. The enzyme catalyses N(6)-carboxybiotinyl-L-lysyl-[protein] + acetyl-CoA = N(6)-biotinyl-L-lysyl-[protein] + malonyl-CoA. The protein operates within lipid metabolism; malonyl-CoA biosynthesis; malonyl-CoA from acetyl-CoA: step 1/1. Functionally, component of the acetyl coenzyme A carboxylase (ACC) complex. First, biotin carboxylase catalyzes the carboxylation of biotin on its carrier protein (BCCP) and then the CO(2) group is transferred by the carboxyltransferase to acetyl-CoA to form malonyl-CoA. In Chlamydia trachomatis serovar D (strain ATCC VR-885 / DSM 19411 / UW-3/Cx), this protein is Acetyl-coenzyme A carboxylase carboxyl transferase subunit alpha.